The sequence spans 160 residues: SsrA-binding protein (160 aa).

The protein belongs to the SmpB family.

It is found in the cytoplasm. In terms of biological role, required for rescue of stalled ribosomes mediated by trans-translation. Binds to transfer-messenger RNA (tmRNA), required for stable association of tmRNA with ribosomes. tmRNA and SmpB together mimic tRNA shape, replacing the anticodon stem-loop with SmpB. tmRNA is encoded by the ssrA gene; the 2 termini fold to resemble tRNA(Ala) and it encodes a 'tag peptide', a short internal open reading frame. During trans-translation Ala-aminoacylated tmRNA acts like a tRNA, entering the A-site of stalled ribosomes, displacing the stalled mRNA. The ribosome then switches to translate the ORF on the tmRNA; the nascent peptide is terminated with the 'tag peptide' encoded by the tmRNA and targeted for degradation. The ribosome is freed to recommence translation, which seems to be the essential function of trans-translation. This Haemophilus ducreyi (strain 35000HP / ATCC 700724) protein is SsrA-binding protein.